Reading from the N-terminus, the 292-residue chain is MPQHDQLHRYLFENFAVRGELVTVSETLQQILDNHNYPQSVKTVLAELLVATSLLTATLKFAGDITVQLQGDGPLSLAVINGNNQQQMRGVARVQGDIPDNADLKTLVGNGYLVITITPEEGERYQGVVGLEGDTLAACLEDYFLRSEQLPTRLFIRTGDVDGKPAAGGMLLQVMPAQNAQAEDFDHLAMLTETIKSEELLTLPANDVLWRLYHEEEVTLYDPQEVEFKCTCSRERCAGALKTLPDEEVDSILAEEGEIDMHCDYCGNHYLFNAMDIAEIRNNASPADPQVH.

2 disulfides stabilise this stretch: C230–C232 and C263–C266.

This sequence belongs to the HSP33 family. Post-translationally, under oxidizing conditions two disulfide bonds are formed involving the reactive cysteines. Under reducing conditions zinc is bound to the reactive cysteines and the protein is inactive.

It localises to the cytoplasm. Its function is as follows. Redox regulated molecular chaperone. Protects both thermally unfolding and oxidatively damaged proteins from irreversible aggregation. Plays an important role in the bacterial defense system toward oxidative stress. This Salmonella typhi protein is 33 kDa chaperonin.